Consider the following 1492-residue polypeptide: Collagen alpha-1(II) chain (1492 aa).

The first 26 residues, 1 to 26, serve as a signal peptide directing secretion; sequence MFSFVDSRTLVLFAATQVILLAVVRC. Residues 27 to 186 constitute a propeptide, N-terminal propeptide; sequence QDEEDVLATG…PPGLGGNFAA (160 aa). The VWFC domain occupies 36–94; that stretch reads GSCVQHGQRYSDKDVWKPEPCQICVCDTGNVLCDEIICEDPKDCPNAEIPFGECCPICP. The interval 98-1255 is disordered; it reads SSTSSGQGVL…ADQASSSVPQ (1158 aa). 2 stretches are compositionally biased toward basic and acidic residues: residues 110-121 and 138-159; these read QKGEPGDIKDVV and PRGDRGDKGEKGAPGPRGRDGE. A compositionally biased stretch (pro residues) spans 163–178; sequence PGNPGPVGPPGPPGPP. Low complexity predominate over residues 197–208; that stretch reads GGAQMGVMQGPM. The tract at residues 206 to 1219 is triple-helical region; that stretch reads GPMGPMGPRG…PGPPGPPGPP (1014 aa). A compositionally biased stretch (pro residues) spans 213 to 222; it reads PRGPPGPTGA. Residues 223-234 show a composition bias toward low complexity; the sequence is PGPQGFQGNPGE. The span at 236–245 shows a compositional bias: gly residues; that stretch reads GEPGAGGPMG. The segment covering 256 to 270 has biased composition (basic and acidic residues); the sequence is PGDDGEAGKPGKSGE. Residues 311-320 show a composition bias toward gly residues; that stretch reads GAKGEGGATG. 4 stretches are compositionally biased toward low complexity: residues 321–333, 340–355, 366–376, and 396–436; these read EAGSPGPMGPRGL, PGASGAAGARGNDGLP, PAGAPGFPGAP, and PRGE…AGAP. Positions 438-447 are enriched in pro residues; it reads FPGPRGPPGP. 2 stretches are compositionally biased toward low complexity: residues 480-490 and 501-517; these read SAGPQGAPGPA and EPGAAGPLGPPGERGAP. Residues 539–548 show a composition bias toward gly residues; it reads GVPGLGGPKG. Composition is skewed to low complexity over residues 627 to 636 and 645 to 655; these read LLGAPGLRGL and AQGPNGPAGPA. 4-hydroxyproline occurs at positions 664 and 673. Proline 675 carries the post-translational modification 3-hydroxyproline. 4-hydroxyproline occurs at positions 676 and 679. Residues 711-741 are compositionally biased toward low complexity; sequence ERGSSGPQGLQGPRGLPGTPGTDGPKGATGP. Residues 769 to 780 show a composition bias toward basic and acidic residues; the sequence is KGDRGDTGEKGP. 2 stretches are compositionally biased toward low complexity: residues 838–850 and 894–910; these read AGFAGPPGADGQA and AQGPPGATGFPGAAGRV. Proline 912 is subject to 3-hydroxyproline. 4-hydroxyproline occurs at positions 913, 919, and 925. Over residues 919 to 930 the composition is skewed to low complexity; it reads PGPSGAPGSAGK. Positions 1010–1019 are enriched in gly residues; sequence GKQGGPGSAG. Residues 1105–1114 show a composition bias toward low complexity; that stretch reads SGPAGARGLP. Residues 1120 to 1134 are compositionally biased toward basic and acidic residues; the sequence is RGDKGEAGEAGERGQ. Composition is skewed to low complexity over residues 1140–1159 and 1176–1186; these read FTGLQGLPGPPGTAGDQGAS and PSGKDGSNGLP. Proline 1149 carries the post-translational modification 3-hydroxyproline. Proline 1186 bears the 4-hydroxyproline mark. The residue at position 1191 (proline 1191) is a 3-hydroxyproline. Position 1192 is a 4-hydroxyproline (proline 1192). The segment covering 1204–1221 has biased composition (pro residues); the sequence is AGPPGQPGPPGPPGPPGP. 3-hydroxyproline is present on proline 1206. 2 positions are modified to 4-hydroxyproline: proline 1207 and proline 1210. Residue proline 1212 is modified to 3-hydroxyproline. 4-hydroxyproline occurs at positions 1213 and 1216. 3-hydroxyproline is present on proline 1218. Position 1219 is a 4-hydroxyproline (proline 1219). Residues 1220-1246 are nonhelical region (C-terminal); the sequence is GPGIDMSAFAGLSQPEKGPDPMRYMRA. Basic and acidic residues predominate over residues 1236–1245; sequence KGPDPMRYMR. Positions 1247–1492 are cleaved as a propeptide — C-terminal propeptide; it reads DQASSSVPQR…GVDIGPVCFL (246 aa). Residues 1258–1492 enclose the Fibrillar collagen NC1 domain; it reads VDVEATLKSL…GVDIGPVCFL (235 aa). 3 cysteine pairs are disulfide-bonded: cysteine 1288–cysteine 1320, cysteine 1328–cysteine 1490, and cysteine 1398–cysteine 1443. Residues aspartate 1306, asparagine 1308, glutamine 1309, cysteine 1311, and aspartate 1314 each contribute to the Ca(2+) site. The N-linked (GlcNAc...) asparagine glycan is linked to asparagine 1393.

Belongs to the fibrillar collagen family. Homotrimers of alpha 1(II) chains. In terms of processing, contains mostly 4-hydroxyproline. Prolines at the third position of the tripeptide repeating unit (G-X-P) are 4-hydroxylated in some or all of the chains. Post-translationally, contains 3-hydroxyproline at a few sites. This modification occurs on the first proline residue in the sequence motif Gly-Pro-Hyp, where Hyp is 4-hydroxyproline. Lysine residues at the third position of the tripeptide repeating unit (G-X-Y) are 5-hydroxylated in some or all of the chains. In terms of processing, O-glycosylated on hydroxylated lysine residues. The O-linked glycan consists of a Glc-Gal disaccharide.

It localises to the secreted. The protein resides in the extracellular space. Its subcellular location is the extracellular matrix. Functionally, type II collagen is specific for cartilaginous tissues. It is essential for the normal embryonic development of the skeleton, for linear growth and for the ability of cartilage to resist compressive forces. In Xenopus tropicalis (Western clawed frog), this protein is Collagen alpha-1(II) chain.